The chain runs to 226 residues: Leucyl/phenylalanyl-tRNA--protein transferase (226 aa).

It belongs to the L/F-transferase family.

The protein resides in the cytoplasm. It carries out the reaction N-terminal L-lysyl-[protein] + L-leucyl-tRNA(Leu) = N-terminal L-leucyl-L-lysyl-[protein] + tRNA(Leu) + H(+). It catalyses the reaction N-terminal L-arginyl-[protein] + L-leucyl-tRNA(Leu) = N-terminal L-leucyl-L-arginyl-[protein] + tRNA(Leu) + H(+). The catalysed reaction is L-phenylalanyl-tRNA(Phe) + an N-terminal L-alpha-aminoacyl-[protein] = an N-terminal L-phenylalanyl-L-alpha-aminoacyl-[protein] + tRNA(Phe). Functions in the N-end rule pathway of protein degradation where it conjugates Leu, Phe and, less efficiently, Met from aminoacyl-tRNAs to the N-termini of proteins containing an N-terminal arginine or lysine. The sequence is that of Leucyl/phenylalanyl-tRNA--protein transferase from Pseudomonas fluorescens (strain ATCC BAA-477 / NRRL B-23932 / Pf-5).